The chain runs to 858 residues: Leucine--tRNA ligase (858 aa).

A 'HIGH' region motif is present at residues 53-63 (PYPSGNLHMGH). The short motif at 622–626 (KMSKS) is the 'KMSKS' region element. Lys625 provides a ligand contact to ATP.

Belongs to the class-I aminoacyl-tRNA synthetase family.

The protein resides in the cytoplasm. The catalysed reaction is tRNA(Leu) + L-leucine + ATP = L-leucyl-tRNA(Leu) + AMP + diphosphate. The protein is Leucine--tRNA ligase of Prochlorococcus marinus subsp. pastoris (strain CCMP1986 / NIES-2087 / MED4).